The following is a 299-amino-acid chain: Bifunctional protein FolD 2 (299 aa).

Residues 168–170 (GRS), Ser193, and Ile234 contribute to the NADP(+) site.

This sequence belongs to the tetrahydrofolate dehydrogenase/cyclohydrolase family. As to quaternary structure, homodimer.

It catalyses the reaction (6R)-5,10-methylene-5,6,7,8-tetrahydrofolate + NADP(+) = (6R)-5,10-methenyltetrahydrofolate + NADPH. The catalysed reaction is (6R)-5,10-methenyltetrahydrofolate + H2O = (6R)-10-formyltetrahydrofolate + H(+). The protein operates within one-carbon metabolism; tetrahydrofolate interconversion. Catalyzes the oxidation of 5,10-methylenetetrahydrofolate to 5,10-methenyltetrahydrofolate and then the hydrolysis of 5,10-methenyltetrahydrofolate to 10-formyltetrahydrofolate. The protein is Bifunctional protein FolD 2 of Rhizobium meliloti (strain 1021) (Ensifer meliloti).